A 188-amino-acid polypeptide reads, in one-letter code: Adenylate kinase (188 aa).

ATP is bound at residue 11 to 16 (GAGKGT). Residues 31–60 (STGDIFRANIKDQTELGREAQRYTDAGNLV) form an NMP region. AMP is bound by residues Thr32, Arg37, 58–60 (NLV), 86–89 (GYPR), and Gln93. The interval 127–137 (GRAQEQGRTDD) is LID. ATP is bound at residue Arg128. AMP is bound by residues Arg134 and Arg145. Residue Gly173 coordinates ATP.

Belongs to the adenylate kinase family. As to quaternary structure, monomer.

It is found in the cytoplasm. The enzyme catalyses AMP + ATP = 2 ADP. It participates in purine metabolism; AMP biosynthesis via salvage pathway; AMP from ADP: step 1/1. In terms of biological role, catalyzes the reversible transfer of the terminal phosphate group between ATP and AMP. Plays an important role in cellular energy homeostasis and in adenine nucleotide metabolism. The protein is Adenylate kinase of Kocuria rhizophila (strain ATCC 9341 / DSM 348 / NBRC 103217 / DC2201).